The chain runs to 426 residues: Serine--tRNA ligase (426 aa).

233–235 (TAE) contributes to the L-serine binding site. Residue 264–266 (RRE) coordinates ATP. An L-serine-binding site is contributed by Glu-287. 351–354 (EISS) contacts ATP. Ser-386 is an L-serine binding site.

Belongs to the class-II aminoacyl-tRNA synthetase family. Type-1 seryl-tRNA synthetase subfamily. As to quaternary structure, homodimer. The tRNA molecule binds across the dimer.

The protein localises to the cytoplasm. The catalysed reaction is tRNA(Ser) + L-serine + ATP = L-seryl-tRNA(Ser) + AMP + diphosphate + H(+). It carries out the reaction tRNA(Sec) + L-serine + ATP = L-seryl-tRNA(Sec) + AMP + diphosphate + H(+). Its pathway is aminoacyl-tRNA biosynthesis; selenocysteinyl-tRNA(Sec) biosynthesis; L-seryl-tRNA(Sec) from L-serine and tRNA(Sec): step 1/1. Catalyzes the attachment of serine to tRNA(Ser). Is also able to aminoacylate tRNA(Sec) with serine, to form the misacylated tRNA L-seryl-tRNA(Sec), which will be further converted into selenocysteinyl-tRNA(Sec). This chain is Serine--tRNA ligase, found in Thermosipho africanus (strain TCF52B).